The chain runs to 560 residues: Glutamine--tRNA ligase (560 aa).

The short motif at 36–46 (PEPNGFAHIGH) is the 'HIGH' region element. ATP is bound by residues 37 to 39 (EPN) and 43 to 49 (HIGHAKA). The L-glutamine site is built by Asp-69 and Tyr-214. 263 to 264 (RL) lines the ATP pocket. A 'KMSKS' region motif is present at residues 270-274 (LTSKR).

The protein belongs to the class-I aminoacyl-tRNA synthetase family. Monomer.

The protein resides in the cytoplasm. The catalysed reaction is tRNA(Gln) + L-glutamine + ATP = L-glutaminyl-tRNA(Gln) + AMP + diphosphate. The polypeptide is Glutamine--tRNA ligase (Chromobacterium violaceum (strain ATCC 12472 / DSM 30191 / JCM 1249 / CCUG 213 / NBRC 12614 / NCIMB 9131 / NCTC 9757 / MK)).